Consider the following 186-residue polypeptide: Methyl-CpG-binding domain-containing protein 4 (186 aa).

A CW-type zinc finger spans residues 22–77 (GRLIDTYAAQCDNCHKWRVIDSQEEYEDIRSKMLEDPFNCQKKQGMSCEEPADIDY). Residues 31-69 (QCDNCHKWRVIDSQEEYEDIRSKMLEDPFNCQKKQGMSC) carry the MBD-associated domain (MAD) motif. Positions 32, 35, 61, and 69 each coordinate Zn(2+). An MBD domain is found at 83–153 (WVIDKPGLPK…GDFNFTVPKV (71 aa)). The interval 154 to 186 (MEDTVPPDPKLGSPFPSTTTTTSEKSSVKQSHN) is disordered. Residues 166-178 (SPFPSTTTTTSEK) show a composition bias toward low complexity.

In terms of tissue distribution, expressed in rosette leaves, buds, flowers, stems, mature seeds and roots.

It is found in the nucleus. Functionally, transcriptional regulator that binds CpG, CpNpN and CpNpG (N is A, T, or C) islands in promoters regardless the DNA methylation status. Plays probably a role in gene silencing. In Arabidopsis thaliana (Mouse-ear cress), this protein is Methyl-CpG-binding domain-containing protein 4 (MBD4).